We begin with the raw amino-acid sequence, 203 residues long: Holliday junction branch migration complex subunit RuvA (203 aa).

The interval 1–63 (MIGQLSGKVD…EEHIHLYGFL (63 aa)) is domain I. The interval 64–142 (TLEEKIFFNL…KISSGSAIIK (79 aa)) is domain II. Positions 143-149 (ESLNIKN) are flexible linker. Residues 150 to 203 (ITPVASNEVIKALVNLGFSRFEAQNAVQGIITQNPEISIDELIKTALKNRNSNF) form a domain III region.

The protein belongs to the RuvA family. As to quaternary structure, homotetramer. Forms an RuvA(8)-RuvB(12)-Holliday junction (HJ) complex. HJ DNA is sandwiched between 2 RuvA tetramers; dsDNA enters through RuvA and exits via RuvB. An RuvB hexamer assembles on each DNA strand where it exits the tetramer. Each RuvB hexamer is contacted by two RuvA subunits (via domain III) on 2 adjacent RuvB subunits; this complex drives branch migration. In the full resolvosome a probable DNA-RuvA(4)-RuvB(12)-RuvC(2) complex forms which resolves the HJ.

Its subcellular location is the cytoplasm. In terms of biological role, the RuvA-RuvB-RuvC complex processes Holliday junction (HJ) DNA during genetic recombination and DNA repair, while the RuvA-RuvB complex plays an important role in the rescue of blocked DNA replication forks via replication fork reversal (RFR). RuvA specifically binds to HJ cruciform DNA, conferring on it an open structure. The RuvB hexamer acts as an ATP-dependent pump, pulling dsDNA into and through the RuvAB complex. HJ branch migration allows RuvC to scan DNA until it finds its consensus sequence, where it cleaves and resolves the cruciform DNA. This chain is Holliday junction branch migration complex subunit RuvA, found in Rickettsia conorii (strain ATCC VR-613 / Malish 7).